The chain runs to 306 residues: tRNA dimethylallyltransferase (306 aa).

12-19 (GPTGVGKS) contributes to the ATP binding site. 14–19 (TGVGKS) contributes to the substrate binding site.

Belongs to the IPP transferase family. In terms of assembly, monomer. Requires Mg(2+) as cofactor.

The enzyme catalyses adenosine(37) in tRNA + dimethylallyl diphosphate = N(6)-dimethylallyladenosine(37) in tRNA + diphosphate. Functionally, catalyzes the transfer of a dimethylallyl group onto the adenine at position 37 in tRNAs that read codons beginning with uridine, leading to the formation of N6-(dimethylallyl)adenosine (i(6)A). The sequence is that of tRNA dimethylallyltransferase from Desulfatibacillum aliphaticivorans.